The following is a 684-amino-acid chain: DNA helicase IV (684 aa).

The region spanning 195–505 is the UvrD-like helicase ATP-binding domain; sequence SPLNPAQARA…CDLDTTYRFN (311 aa). ATP-binding positions include 216-223 and Arg-503; that span reads AGAGSGKT.

It belongs to the helicase family. UvrD subfamily.

The enzyme catalyses Couples ATP hydrolysis with the unwinding of duplex DNA by translocating in the 3'-5' direction.. It carries out the reaction ATP + H2O = ADP + phosphate + H(+). Its function is as follows. Helicase IV catalyzes the unwinding of duplex DNA in the 3' to 5' direction with respect to the bound single strand in a reaction that is dependent upon the hydrolysis of ATP. This Escherichia coli (strain K12) protein is DNA helicase IV (helD).